A 69-amino-acid polypeptide reads, in one-letter code: Putative membrane protein insertion efficiency factor (69 aa).

The protein belongs to the UPF0161 family.

Its subcellular location is the cell inner membrane. In terms of biological role, could be involved in insertion of integral membrane proteins into the membrane. This chain is Putative membrane protein insertion efficiency factor, found in Nitrosomonas eutropha (strain DSM 101675 / C91 / Nm57).